The chain runs to 499 residues: uncharacterized protein (499 aa).

2 disordered regions span residues 76 to 118 (QATA…RLSP) and 208 to 268 (DFET…DWAN). Positions 87 to 104 (DPEKQTGKSRYHPSEEIR) are enriched in basic and acidic residues. Positions 208 to 263 (DFETEDDESGDDDSEDTGEDEDEEEWVAILEDEDEDDDDDDDDDEDDDDSDSDESL) are enriched in acidic residues. Ser355 carries the post-translational modification Phosphoserine. The tract at residues 478–499 (AEGQIRKLLFPKTNQSTQPKPK) is disordered. Polar residues predominate over residues 489–499 (KTNQSTQPKPK).

This is an uncharacterized protein from Arabidopsis thaliana (Mouse-ear cress).